A 158-amino-acid chain; its full sequence is 2-amino-4-hydroxy-6-hydroxymethyldihydropteridine pyrophosphokinase (158 aa).

Belongs to the HPPK family.

It carries out the reaction 6-hydroxymethyl-7,8-dihydropterin + ATP = (7,8-dihydropterin-6-yl)methyl diphosphate + AMP + H(+). It participates in cofactor biosynthesis; tetrahydrofolate biosynthesis; 2-amino-4-hydroxy-6-hydroxymethyl-7,8-dihydropteridine diphosphate from 7,8-dihydroneopterin triphosphate: step 4/4. Catalyzes the transfer of pyrophosphate from adenosine triphosphate (ATP) to 6-hydroxymethyl-7,8-dihydropterin, an enzymatic step in folate biosynthesis pathway. The chain is 2-amino-4-hydroxy-6-hydroxymethyldihydropteridine pyrophosphokinase (folK) from Methylorubrum extorquens (strain ATCC 14718 / DSM 1338 / JCM 2805 / NCIMB 9133 / AM1) (Methylobacterium extorquens).